The chain runs to 487 residues: Cysteine--tRNA ligase (487 aa).

A Zn(2+)-binding site is contributed by Cys29. The 'HIGH' region signature appears at 31-41 (VTVYDYNHVGH). Positions 209, 234, and 238 each coordinate Zn(2+). Positions 266-270 (KMSKS) match the 'KMSKS' region motif. Lys269 is an ATP binding site.

It belongs to the class-I aminoacyl-tRNA synthetase family. Monomer. Requires Zn(2+) as cofactor.

The protein resides in the cytoplasm. It carries out the reaction tRNA(Cys) + L-cysteine + ATP = L-cysteinyl-tRNA(Cys) + AMP + diphosphate. This Sulfurihydrogenibium sp. (strain YO3AOP1) protein is Cysteine--tRNA ligase.